The sequence spans 443 residues: ATP-dependent protease ATPase subunit HslU (443 aa).

ATP is bound by residues Ile18 and 60–65; that span reads GVGKTE. The segment at 142-162 is disordered; the sequence is LGFEASPSEESNATRQKFRKK. ATP-binding residues include Asp256, Glu321, and Arg393.

The protein belongs to the ClpX chaperone family. HslU subfamily. A double ring-shaped homohexamer of HslV is capped on each side by a ring-shaped HslU homohexamer. The assembly of the HslU/HslV complex is dependent on binding of ATP.

The protein localises to the cytoplasm. Its function is as follows. ATPase subunit of a proteasome-like degradation complex; this subunit has chaperone activity. The binding of ATP and its subsequent hydrolysis by HslU are essential for unfolding of protein substrates subsequently hydrolyzed by HslV. HslU recognizes the N-terminal part of its protein substrates and unfolds these before they are guided to HslV for hydrolysis. This is ATP-dependent protease ATPase subunit HslU from Nitrosomonas europaea (strain ATCC 19718 / CIP 103999 / KCTC 2705 / NBRC 14298).